The following is a 244-amino-acid chain: Ureidoacrylate amidohydrolase RutB (244 aa).

Catalysis depends on Asp38, which acts as the Proton acceptor. Lys147 is an active-site residue. Residue Cys180 is the Nucleophile of the active site.

It belongs to the isochorismatase family. RutB subfamily.

The catalysed reaction is (Z)-3-ureidoacrylate + H2O + H(+) = (Z)-3-aminoacrylate + NH4(+) + CO2. It carries out the reaction (Z)-3-ureidoacrylate + H2O = (Z)-3-aminoacrylate + carbamate + H(+). The enzyme catalyses (Z)-2-methylureidoacrylate + H2O + H(+) = (Z)-2-methylaminoacrylate + NH4(+) + CO2. Functionally, hydrolyzes ureidoacrylate to form aminoacrylate and carbamate. The carbamate hydrolyzes spontaneously, thereby releasing one of the nitrogen atoms of the pyrimidine ring as ammonia and one of its carbon atoms as CO2. In Escherichia coli O1:K1 / APEC, this protein is Ureidoacrylate amidohydrolase RutB.